An 85-amino-acid polypeptide reads, in one-letter code: U4-theraphotoxin-Hhn1a (85 aa).

The N-terminal stretch at 1–22 (MKVTLIAILTCAAVLVLHTTAA) is a signal peptide. Residues 23–48 (EELEAESQLMEVGMPDTELAAVDEER) constitute a propeptide that is removed on maturation. Intrachain disulfides connect cysteine 52–cysteine 66, cysteine 56–cysteine 77, and cysteine 71–cysteine 82.

It belongs to the neurotoxin 12 (Hwtx-2) family. 02 (Hwtx-2) subfamily. Monomer. In terms of tissue distribution, expressed by the venom gland.

Its subcellular location is the secreted. In terms of biological role, neurotoxin active on both insects and mammals. This chain is U4-theraphotoxin-Hhn1a, found in Cyriopagopus hainanus (Chinese bird spider).